The sequence spans 79 residues: Small ribosomal subunit protein bS16 (79 aa).

It belongs to the bacterial ribosomal protein bS16 family.

In Hahella chejuensis (strain KCTC 2396), this protein is Small ribosomal subunit protein bS16.